The primary structure comprises 204 residues: Vacuolar protein-sorting-associated protein 46 (204 aa).

The interaction with VSP24 stretch occupies residues 1–103; the sequence is MSRNSAAGLE…ASMGQVCKGM (103 aa). The residue at position 5 (Ser5) is a Phosphoserine. Coiled coils occupy residues 9–56 and 109–129; these read LENT…RIYA and NMNL…FEDL. Positions 104-204 are interaction with VSP4; the sequence is DKALQNMNLQ…LAQRLRALRG (101 aa). Residues 176–204 are interaction with VTA1; sequence NVPEIKAKEVNVDDEKEDKLAQRLRALRG. Positions 185–196 are enriched in basic and acidic residues; it reads VNVDDEKEDKLA. Positions 185-204 are disordered; sequence VNVDDEKEDKLAQRLRALRG.

Belongs to the SNF7 family. Self-associates. Interacts with VPS4 and VTA1. Interacts with IST1.

It is found in the endosome membrane. It localises to the endomembrane system. Its function is as follows. Class E VPS protein implicated in concentration and sorting of cargo proteins of the multivesicular body (MVB) for incorporation into intralumenal vesicles. The lumenal sequestrated membrane proteins will be targeted into the vacuole after fusion of the endosome with the vacuole. Probably acts as a peripherally associated component of the ESCRT-III complex, which appears to be critical for late steps in MVB sorting, such as membrane invagination and final cargo sorting and recruits late-acting components of the sorting machinery. The MVB pathway requires the sequential function of ESCRT-O, -I,-II and -III complex assemblies. Regulates the membrane association of VPS4. Can stimulate VPS4 ATPase activity directly or via VTA1. In Saccharomyces cerevisiae (strain ATCC 204508 / S288c) (Baker's yeast), this protein is Vacuolar protein-sorting-associated protein 46 (DID2).